Here is a 54-residue protein sequence, read N- to C-terminus: UPF0391 membrane protein PFL_0093 (54 aa).

Transmembrane regions (helical) follow at residues 4-24 (WAITFLIIAIVAAVLGFGGIA) and 29-49 (GIAKILFVVFLVMFIASFFFG).

It belongs to the UPF0391 family.

It is found in the cell membrane. The sequence is that of UPF0391 membrane protein PFL_0093 from Pseudomonas fluorescens (strain ATCC BAA-477 / NRRL B-23932 / Pf-5).